The chain runs to 340 residues: Thioesterase pkgB (340 aa).

The Zn(2+) site is built by histidine 97, histidine 99, aspartate 101, histidine 102, and histidine 205. Residue aspartate 101 is the Proton donor/acceptor of the active site. Positions 242 to 258 are enriched in low complexity; that stretch reads SSRNGGSTSSIGSVSES. Positions 242-271 are disordered; sequence SSRNGGSTSSIGSVSESGDSDEEDNNMKTS.

This sequence belongs to the metallo-beta-lactamase superfamily. Requires Zn(2+) as cofactor.

It carries out the reaction 3,5,7,9,11,13-hexaoxotetradecanoyl-[ACP] = dehydrocitreoisocoumarin + holo-[ACP] + H2O. The enzyme catalyses 3,5,7,9,11-pentaoxododecanoyl-[ACP] = 6,8-dihydroxy-3-(2-oxopropyl)-isocoumarin + holo-[ACP] + H2O. Functionally, thioesterase; part of the pkg gene cluster that mediates the biosynthesis of dihydrocitreoisocoumarin and 6,8-dihydroxy-3-(2-oxopropyl)-isocoumarin. The non-reducing polyketide synthase pkgA performs the condensation of one acetyl-CoA starter unit with 6 and 5 malonyl-CoA units, respectively. As pkgA lacks a releasing domain, the thioesterase pkgB is necessary to break the thioester bond and release dihydrocitreoisocoumarin and 6,8-dihydroxy-3-(2-oxopropyl)-isocoumarin from pkgA. This is Thioesterase pkgB from Emericella nidulans (strain FGSC A4 / ATCC 38163 / CBS 112.46 / NRRL 194 / M139) (Aspergillus nidulans).